Reading from the N-terminus, the 350-residue chain is Palmitoyltransferase erf2 (350 aa).

Topologically, residues 1 to 86 (MSYEKHSDAK…RLQMSSQYKA (86 aa)) are cytoplasmic. Residues 87–107 (FLISLFALILPGVLFFIFSAF) form a helical membrane-spanning segment. Over 108 to 112 (WLWHH) the chain is Lumenal. Residues 113 to 133 (VSPAVPITFAYLYALAVVSMF) traverse the membrane as a helical segment. Over 134–225 (KCSTADPGIL…NTCIGRRNYR (92 aa)) the chain is Cytoplasmic. The DHHC domain occupies 182 to 232 (VYCHTCHLYRPPRASHCHLCDNCVEYLDHHCIWLNTCIGRRNYRYYFIFLL). Cys212 acts as the S-palmitoyl cysteine intermediate in catalysis. Residues 226-246 (YYFIFLLSVVLSALYLTGLGF) traverse the membrane as a helical segment. Over 247–270 (YTSIGSFHESTDTNFAAHLRRPWA) the chain is Lumenal. Residues 271-291 (GVSFFLGIYGALGAILPGILF) form a helical membrane-spanning segment. Residues 292 to 350 (CYQCYLISVGQNVHEYLRAKSTETEDVHPFHDSIWLNFLVVLCRPKNVSYVRPTRKSYV) lie on the Cytoplasmic side of the membrane.

It belongs to the DHHC palmitoyltransferase family. ERF2/ZDHHC9 subfamily. In terms of assembly, interacts with erf4. Post-translationally, autopalmitoylated.

It is found in the endoplasmic reticulum membrane. The protein localises to the golgi apparatus. Its subcellular location is the golgi stack membrane. The catalysed reaction is L-cysteinyl-[protein] + hexadecanoyl-CoA = S-hexadecanoyl-L-cysteinyl-[protein] + CoA. Its function is as follows. The erf2-erf4 complex is a palmitoyltransferase with a major role in driving sexual development. Palmitoylates ras1. Palmitoylates isp3. Palmitoylates rho3. The sequence is that of Palmitoyltransferase erf2 from Schizosaccharomyces pombe (strain 972 / ATCC 24843) (Fission yeast).